A 599-amino-acid chain; its full sequence is Dual specificity tyrosine-phosphorylation-regulated kinase 2 (599 aa).

A disordered region spans residues 1-55; the sequence is MLTRKPSAAAPAAYPTGRGGDTAVRQLQASPGIGAGAPRSGVGTGPPSPIALPPL. Position 30 is a phosphoserine (serine 30). Threonine 104 is modified (phosphothreonine; by ATM). The Nuclear localization signal motif lies at 187–189; that stretch reads KKR. The region spanning 220–533 is the Protein kinase domain; the sequence is YEVLKVIGKG…PGQALRHPWL (314 aa). Residues 226–234, lysine 249, and 299–302 each bind ATP; these read IGKGSFGQV and FELL. The active-site Proton acceptor is aspartate 346. Threonine 379 is subject to Phosphothreonine; by MAP3K10. Tyrosine 380 is modified (phosphotyrosine; by autocatalysis). Serine 440 carries the post-translational modification Phosphoserine; by ATM. Serine 447 is modified (phosphoserine; by MAP3K10).

This sequence belongs to the protein kinase superfamily. CMGC Ser/Thr protein kinase family. MNB/DYRK subfamily. As to quaternary structure, component of an E3 ligase complex containing DYRK2, EDD/UBR5, DDB1 and DCAF1 (EDVP complex). Interacts directly with EDD/UBR5, DDB1 and DCAF1. Interacts with SIAH2 and MDM2. Interacts with MAP3K10 and NFATC1. May also interact with CCNL2. Mg(2+) is required as a cofactor. It depends on Mn(2+) as a cofactor. Post-translationally, autophosphorylates cotranslationally on the second tyrosine residue in the Tyr-X-Tyr motif in the activation loop, but once mature, does not have any protein tyrosine kinase activity. Phosphorylated at Thr-104 and Ser-440 by ATM in response to genotoxic stress. Under normal conditions, polyubiquitinated in the nucleus by MDM2, leading to its proteasomal degradation. Phosphorylation on Thr-104 and Ser-440 by ATM in response to genotoxic stress disrupts MDM2 binding and prevents MDM2-mediated ubiquitination and subsequent proteasomal degradation. Polyubiquitinated by SIAH2, leading to its proteasomal degradation. Polyubiquitinated by SIAH2 occurs under normal conditions, and is enhanced in response to hypoxia.

It localises to the cytoplasm. It is found in the nucleus. It carries out the reaction L-seryl-[protein] + ATP = O-phospho-L-seryl-[protein] + ADP + H(+). The catalysed reaction is L-threonyl-[protein] + ATP = O-phospho-L-threonyl-[protein] + ADP + H(+). It catalyses the reaction L-tyrosyl-[protein] + ATP = O-phospho-L-tyrosyl-[protein] + ADP + H(+). Activated by autophosphorylation on the second tyrosine residue in the Tyr-X-Tyr motif in the activation loop. Its function is as follows. Serine/threonine-protein kinase involved in the regulation of the mitotic cell cycle, cell proliferation, apoptosis, organization of the cytoskeleton and neurite outgrowth. Functions in part via its role in ubiquitin-dependent proteasomal protein degradation. Functions downstream of ATM and phosphorylates p53/TP53 at 'Ser-46', and thereby contributes to the induction of apoptosis in response to DNA damage. Phosphorylates NFATC1, and thereby inhibits its accumulation in the nucleus and its transcription factor activity. Phosphorylates EIF2B5 at 'Ser-544', enabling its subsequent phosphorylation and inhibition by GSK3B. Likewise, phosphorylation of NFATC1, CRMP2/DPYSL2 and CRMP4/DPYSL3 promotes their subsequent phosphorylation by GSK3B. May play a general role in the priming of GSK3 substrates. Inactivates GYS1 by phosphorylation at 'Ser-641', and potentially also a second phosphorylation site, thus regulating glycogen synthesis. Mediates EDVP E3 ligase complex formation and is required for the phosphorylation and subsequent degradation of KATNA1. Phosphorylates TERT at 'Ser-457', promoting TERT ubiquitination by the EDVP complex. Phosphorylates SIAH2, and thereby increases its ubiquitin ligase activity. Promotes the proteasomal degradation of MYC and JUN, and thereby regulates progress through the mitotic cell cycle and cell proliferation. Promotes proteasomal degradation of GLI2 and GLI3, and thereby plays a role in smoothened and sonic hedgehog signaling. Phosphorylates CRMP2/DPYSL2, CRMP4/DPYSL3, DCX, EIF2B5, EIF4EBP1, GLI2, GLI3, GYS1, JUN, MDM2, MYC, NFATC1, p53/TP53, TAU/MAPT and KATNA1. Can phosphorylate histone H1, histone H3 and histone H2B (in vitro). Can phosphorylate CARHSP1 (in vitro). Plays a role in cytoskeleton organization and neurite outgrowth via its phosphorylation of DCX. This chain is Dual specificity tyrosine-phosphorylation-regulated kinase 2, found in Mus musculus (Mouse).